Consider the following 431-residue polypeptide: Enolase (431 aa).

Gln166 contributes to the (2R)-2-phosphoglycerate binding site. Glu208 functions as the Proton donor in the catalytic mechanism. Mg(2+) is bound by residues Asp245, Glu288, and Asp315. 4 residues coordinate (2R)-2-phosphoglycerate: Lys340, Arg369, Ser370, and Lys391. The active-site Proton acceptor is Lys340.

This sequence belongs to the enolase family. The cofactor is Mg(2+).

It localises to the cytoplasm. The protein localises to the secreted. Its subcellular location is the cell surface. The catalysed reaction is (2R)-2-phosphoglycerate = phosphoenolpyruvate + H2O. The protein operates within carbohydrate degradation; glycolysis; pyruvate from D-glyceraldehyde 3-phosphate: step 4/5. Catalyzes the reversible conversion of 2-phosphoglycerate (2-PG) into phosphoenolpyruvate (PEP). It is essential for the degradation of carbohydrates via glycolysis. This is Enolase from Clostridium botulinum (strain ATCC 19397 / Type A).